A 114-amino-acid polypeptide reads, in one-letter code: Ribonuclease P protein component (114 aa).

This sequence belongs to the RnpA family. Consists of a catalytic RNA component (M1 or rnpB) and a protein subunit.

It catalyses the reaction Endonucleolytic cleavage of RNA, removing 5'-extranucleotides from tRNA precursor.. Functionally, RNaseP catalyzes the removal of the 5'-leader sequence from pre-tRNA to produce the mature 5'-terminus. It can also cleave other RNA substrates such as 4.5S RNA. The protein component plays an auxiliary but essential role in vivo by binding to the 5'-leader sequence and broadening the substrate specificity of the ribozyme. This chain is Ribonuclease P protein component, found in Buchnera aphidicola subsp. Baizongia pistaciae (strain Bp).